A 398-amino-acid chain; its full sequence is Arginine biosynthesis bifunctional protein ArgJ (398 aa).

Residues Thr148, Lys174, Thr185, Glu271, Asn393, and Thr398 each contribute to the substrate site. Thr185 acts as the Nucleophile in catalysis.

Belongs to the ArgJ family. As to quaternary structure, heterotetramer of two alpha and two beta chains.

The protein localises to the cytoplasm. The enzyme catalyses N(2)-acetyl-L-ornithine + L-glutamate = N-acetyl-L-glutamate + L-ornithine. It catalyses the reaction L-glutamate + acetyl-CoA = N-acetyl-L-glutamate + CoA + H(+). The protein operates within amino-acid biosynthesis; L-arginine biosynthesis; L-ornithine and N-acetyl-L-glutamate from L-glutamate and N(2)-acetyl-L-ornithine (cyclic): step 1/1. Its pathway is amino-acid biosynthesis; L-arginine biosynthesis; N(2)-acetyl-L-ornithine from L-glutamate: step 1/4. Catalyzes two activities which are involved in the cyclic version of arginine biosynthesis: the synthesis of N-acetylglutamate from glutamate and acetyl-CoA as the acetyl donor, and of ornithine by transacetylation between N(2)-acetylornithine and glutamate. In Listeria monocytogenes serovar 1/2a (strain ATCC BAA-679 / EGD-e), this protein is Arginine biosynthesis bifunctional protein ArgJ.